We begin with the raw amino-acid sequence, 72 residues long: Conotoxin Lt6.3 (72 aa).

A signal peptide spans 1 to 22; it reads MKLTSVVIVAVLFLAACQLTTS. A propeptide spanning residues 23-46 is cleaved from the precursor; the sequence is DGSRGTWKDRAVRSITKVSMLRWP. 3 cysteine pairs are disulfide-bonded: Cys-47–Cys-61, Cys-54–Cys-64, and Cys-60–Cys-71.

It belongs to the conotoxin O1 superfamily. In terms of tissue distribution, expressed by the venom duct.

Its subcellular location is the secreted. The sequence is that of Conotoxin Lt6.3 from Conus litteratus (Lettered cone).